Consider the following 192-residue polypeptide: Ion-translocating oxidoreductase complex subunit B (192 aa).

Positions 1–26 are hydrophobic; sequence MNAIWIAVAAVSLLALAFGAILGYAS. Residues 32–91 form the 4Fe-4S domain; it reads EDDPVVEKIDEILPQSQCGQCGYPGCRPYAEAISCNGEKINRCAPGGEAVMLKIAELLNV. [4Fe-4S] cluster contacts are provided by C49, C52, C57, C74, C117, C120, C123, C127, C147, C150, C153, and C157. 2 4Fe-4S ferredoxin-type domains span residues 108–137 and 138–167; these read MVAV…GATR and AMHT…LQPV.

This sequence belongs to the 4Fe4S bacterial-type ferredoxin family. RnfB subfamily. The complex is composed of six subunits: RsxA, RsxB, RsxC, RsxD, RsxE and RsxG. [4Fe-4S] cluster serves as cofactor.

Its subcellular location is the cell inner membrane. Its function is as follows. Part of a membrane-bound complex that couples electron transfer with translocation of ions across the membrane. Required to maintain the reduced state of SoxR. The sequence is that of Ion-translocating oxidoreductase complex subunit B from Escherichia coli O81 (strain ED1a).